The chain runs to 731 residues: MCQKYDTLSGDRDVEHDEHFVLEDYDSESEDQNISSKSLGHSSELSMSTLALLERFKKQYSAPTEEEETVGDDEPKIFYCSRTHSQLAQFASELRRVEMPPSLPKELSEKLTDSEALEERVKHLSLGSRKNLCINPRVMKLENATAINERCMDLQQPGMAVEHRCPYLPSKDDEPQVLQFRDHTLATVKDIEDMGKLGKHIGVCPYYASRSVIKHSEIVTLPYPLLLQRSAREALGLSIKNHIVIIDEAHNLMDAISNIHSVTITLSQLQTAIFQLTTYARKFKTRLKGKNRTYIAQVIRLVSSVADHLRSIQGSNQPPDGAVKTSDLMAGKGVDQINPYKLSHYLQESKLARKVDGYVEYSKDTANRQSHGKPSTPVLFHVQSFLLPLMNPSAEGRLFYMKDQNDIQLKYLLLDPTNHFREIVEDARAVILAGGTMSPMSDYMNHLFPYVPASRLDTFSYGHVIPPENLVAHTLAQGVMGCAFDFTYESRDSEKMIIDLGRTVATLCQAIPDGVVAFFPSYDYLSRILHIWKKPLGADKNQTILGLIERKKPILYESRDMTTKSDDILQEYTRTIDSGSGALLLSVIGGKLSEGINFSDRLGRGVLIIGLPFPNIRSAVWQAKLQYVEQKAYSGSSGSETDRQMIAKAAGRDFYENACMRAVNQCIGRAIRHRNDYAAIVMIDRRYDKPNIQGKLPAWIKQSMVRSPTQRPAGATVQNLIKFFAARGSLD.

The disordered stretch occupies residues 1–42 (MCQKYDTLSGDRDVEHDEHFVLEDYDSESEDQNISSKSLGHS). The region spanning 1–299 (MCQKYDTLSG…KNRTYIAQVI (299 aa)) is the Helicase ATP-binding domain. The segment covering 9–22 (SGDRDVEHDEHFVL) has biased composition (basic and acidic residues). 35–42 (SSKSLGHS) is a binding site for ATP. [4Fe-4S] cluster-binding residues include C133, C151, C165, and C204. The DEAH box motif lies at 247–250 (DEAH).

Belongs to the DEAD box helicase family. DEAH subfamily. DDX11/CHL1 sub-subfamily. Requires [4Fe-4S] cluster as cofactor.

The protein resides in the nucleus. The enzyme catalyses Couples ATP hydrolysis with the unwinding of duplex DNA at the replication fork by translocating in the 5'-3' direction. This creates two antiparallel DNA single strands (ssDNA). The leading ssDNA polymer is the template for DNA polymerase III holoenzyme which synthesizes a continuous strand.. The catalysed reaction is ATP + H2O = ADP + phosphate + H(+). In terms of biological role, ATP-dependent DNA helicase important for chromosome transmission and normal cell cycle progression in G(2)/M. May have a role in changing DNA topology to allow the loading of proteins involved in maintaining sister chromatid cohesion in the vicinity of the centromeres. Has a specific role in chromosome segregation during meiosis II. The chain is ATP-dependent DNA helicase chl1 (chl1) from Aspergillus clavatus (strain ATCC 1007 / CBS 513.65 / DSM 816 / NCTC 3887 / NRRL 1 / QM 1276 / 107).